Reading from the N-terminus, the 288-residue chain is uncharacterized protein (288 aa).

4 consecutive transmembrane segments (helical) span residues 43–63 (LFTL…NYII), 190–210 (LFIF…FLLE), 243–263 (GIPI…SILI), and 265–285 (LLQM…NKSL).

The protein localises to the cell membrane. This is an uncharacterized protein from Rickettsia prowazekii (strain Madrid E).